The primary structure comprises 366 residues: G-protein coupled receptor 183 (366 aa).

Topologically, residues Met-1–Arg-37 are extracellular. A glycan (N-linked (GlcNAc...) asparagine) is linked at Asn-21. Residues Val-38–Arg-63 form a helical membrane-spanning segment. The Cytoplasmic segment spans residues Pro-64–Asp-83. A helical transmembrane segment spans residues Ile-84–Phe-101. Topologically, residues His-102 to Lys-111 are extracellular. Cys-110 and Cys-188 are joined by a disulfide. A helical membrane pass occupies residues Ile-112 to Val-133. The Cytoplasmic segment spans residues Asp-134–Arg-155. Residues Tyr-156–Ser-174 traverse the membrane as a helical segment. The Extracellular portion of the chain corresponds to Met-175 to Asn-199. A helical transmembrane segment spans residues Ile-200 to Cys-222. The Cytoplasmic portion of the chain corresponds to Tyr-223 to Lys-248. A helical transmembrane segment spans residues Ala-249–Leu-272. Residues Gln-273–Gln-292 are Extracellular-facing. A helical membrane pass occupies residues Ile-293–Cys-317. The Cytoplasmic segment spans residues Lys-318–Glu-366.

It belongs to the G-protein coupled receptor 1 family.

The protein resides in the cell membrane. G-protein coupled receptor expressed in lymphocytes that acts as a chemotactic receptor for B-cells, T-cells, splenic dendritic cells, monocytes/macrophages and astrocytes. Receptor for oxysterol 7-alpha,25-dihydroxycholesterol (7-alpha,25-OHC) and other related oxysterols. Mediates cell positioning and movement of a number of cells by binding the 7-alpha,25-OHC ligand that forms a chemotactic gradient. Binding of 7-alpha,25-OHC mediates the correct localization of B-cells during humoral immune responses. The chain is G-protein coupled receptor 183 (gpr183) from Salmo salar (Atlantic salmon).